Reading from the N-terminus, the 75-residue chain is Tautomerase PptA (75 aa).

The active-site Proton acceptor; via imino nitrogen is the Pro-2.

The protein belongs to the 4-oxalocrotonate tautomerase family. PptA subfamily. Homodimer.

The protein localises to the cytoplasm. The sequence is that of Tautomerase PptA from Escherichia coli O127:H6 (strain E2348/69 / EPEC).